The primary structure comprises 118 residues: UPF0231 protein PM0457 (118 aa).

Belongs to the UPF0231 family.

The polypeptide is UPF0231 protein PM0457 (Pasteurella multocida (strain Pm70)).